The chain runs to 153 residues: Fucose mutarotase (153 aa).

Histidine 24 acts as the Proton donor in catalysis. Aspartate 32 contributes to the substrate binding site. Aspartate 69 is an active-site residue. 4 residues coordinate substrate: methionine 79, tyrosine 119, tyrosine 137, and asparagine 139. The active site involves tyrosine 119.

It belongs to the RbsD / FucU family. In terms of assembly, mainly homodimer, but also exists as homotetramer, homooctamer, and homodecamer. The homodimeric form seems catalytically inactive.

The enzyme catalyses alpha-L-fucose = beta-L-fucose. The protein operates within carbohydrate metabolism; L-fucose metabolism. Its function is as follows. Involved in the interconversion between alpha- and beta-L-fucoses. L-Fucose (6-deoxy-L-galactose) exists as alpha-L-fucose (29.5%) and beta-L-fucose (70.5%), the beta-form is metabolized through the salvage pathway. GDP-L-fucose formed either by the de novo or salvage pathways is transported into the endoplasmic reticulum, where it serves as a substrate for N- and O-glycosylations by fucosyltransferases. Fucosylated structures expressed on cell surfaces or secreted in biological fluids are believed to play a critical role in cell-cell adhesion and recognition processes. The chain is Fucose mutarotase (FUOM) from Bos taurus (Bovine).